The following is a 134-amino-acid chain: Secreted RxLR effector protein 1 (134 aa).

Positions 1–22 (MFCRSPLVAVILLVLATHIVLA) are cleaved as a signal peptide. The segment at 32–60 (SETVPSDSSQTTRKSTRRTTSVDNKRRLR) is disordered. The span at 37-52 (SDSSQTTRKSTRRTTS) shows a compositional bias: low complexity. The RxLR-dEER signature appears at 57–79 (RRLRQQIMGKDGPVVNDVHAEER).

This sequence belongs to the RxLR effector family.

Its subcellular location is the secreted. The protein resides in the host nucleus. In terms of biological role, effector that acts as a broad suppressor of cell death to interrupt plant immunity. Inhibits cell death induced by cell death-inducing proteins, including the PAMP elicitor INF1 from P.infestans. This Plasmopara viticola (Downy mildew of grapevine) protein is Secreted RxLR effector protein 1.